Consider the following 159-residue polypeptide: Probable RNA-binding protein EIF1AD (159 aa).

An S1-like domain is found at methionine 18–threonine 93. The disordered stretch occupies residues lysine 109 to aspartate 159. A compositionally biased stretch (acidic residues) spans serine 146–aspartate 159.

The protein belongs to the EIF1AD family.

The sequence is that of Probable RNA-binding protein EIF1AD from Drosophila melanogaster (Fruit fly).